Here is a 501-residue protein sequence, read N- to C-terminus: Zinc finger protein 704 (501 aa).

Residues 80 to 96 (SLKSTCNGGQRDGLTQG) are compositionally biased toward polar residues. Disordered stretches follow at residues 80-138 (SLKS…HTRS), 183-203 (PLVRSPPVKVSEGLNGSWKDG), and 216-267 (WSWS…LFDE). Residues 115-137 (EEPRVLEHKRTGRALETEKDHTR) are compositionally biased toward basic and acidic residues. The C2H2-type zinc finger occupies 281-306 (FKCLWKNCGKVLSTAAGIQRHIRTVH). Disordered regions lie at residues 340–380 (SLSP…SRSA), 398–419 (PVTIPSTSSTGFTPSSSSFSIS), 427–446 (FTGTSASPTHSRTQGFGEQH), and 453–472 (LSSPPRAAGSLSRKSRGEGK). Over residues 368-380 (SESSSSTPLSRSA) the composition is skewed to low complexity. The CR1 signature appears at 472–476 (KKCRK). Residues 490 to 494 (CRWKK) carry the CR2 motif.

The protein resides in the nucleus. Its function is as follows. Transcription factor. The chain is Zinc finger protein 704 (znf704) from Danio rerio (Zebrafish).